The chain runs to 399 residues: Lysosomal acid lipase/cholesteryl ester hydrolase (399 aa).

The first 27 residues, 1-27 (MKMRFLGLVVCLVLWTLHSEASGGKLT), serve as a signal peptide directing secretion. A propeptide spans 28 to 76 (AVNPETNMNVSEIISYWGFPSEEYLVETEDGYILCLNRIPHGRKNHSDK) (removed in mature form). 4 N-linked (GlcNAc...) asparagine glycosylation sites follow: asparagine 36, asparagine 72, asparagine 101, and asparagine 161. The AB hydrolase-1 domain occupies 80–380 (PVVFLQHGLL…EWEHLDFIWG (301 aa)). The active-site Charge relay system is serine 174. Asparagine 273 and asparagine 321 each carry an N-linked (GlcNAc...) asparagine glycan. The Charge relay system role is filled by histidine 374.

Belongs to the AB hydrolase superfamily. Lipase family. In terms of assembly, monomer. Glycosylation is not essential for catalytic activity.

It localises to the lysosome. It carries out the reaction a sterol ester + H2O = a sterol + a fatty acid + H(+). The enzyme catalyses cholesteryl (9Z-octadecenoate) + H2O = cholesterol + (9Z)-octadecenoate + H(+). It catalyses the reaction a triacylglycerol + H2O = a 1,2-diacylglycerol + a fatty acid + H(+). The catalysed reaction is 1,2-di-(9Z-octadecenoyl)-glycerol + (9Z)-octadecenoate + H(+) = 1,2,3-tri-(9Z-octadecenoyl)-glycerol + H2O. It carries out the reaction a 1,2-diacylglycerol + H2O = a 1-acylglycerol + a fatty acid + H(+). The enzyme catalyses 1,2-di-(9Z-octadecenoyl)-glycerol + H2O = 1-(9Z-octadecenoyl)-glycerol + (9Z)-octadecenoate + H(+). It catalyses the reaction a 1,3-diacylglycerol + H2O = a 1-acylglycerol + a fatty acid + H(+). The catalysed reaction is 1,3-di-(9Z-octadecenoyl)-glycerol + H2O = 1-(9Z-octadecenoyl)-glycerol + (9Z)-octadecenoate + H(+). Its function is as follows. Catalyzes the deacylation of cholesteryl ester core lipids of endocytosed low density lipoproteins to generate free fatty acids and cholesterol. Hydrolyzes triglycerides (1,2,3-triacylglycerol) and diglycerides (such as 1,2-diacylglycerol and 1,3-diacylglycerol) with preference for the acyl moieties at the sn-1 or sn-3 positions. The polypeptide is Lysosomal acid lipase/cholesteryl ester hydrolase (LIPA) (Macaca fascicularis (Crab-eating macaque)).